The following is a 230-amino-acid chain: dITP/XTP pyrophosphatase (230 aa).

7–12 (STNPGK) contributes to the substrate binding site. 2 residues coordinate Mg(2+): Glu41 and Asp70. Asp70 functions as the Proton acceptor in the catalytic mechanism. Residues Ser71, 181-184 (FGYD), Lys205, and 210-211 (HR) each bind substrate.

This sequence belongs to the HAM1 NTPase family. Homodimer. Mg(2+) serves as cofactor.

It catalyses the reaction XTP + H2O = XMP + diphosphate + H(+). The enzyme catalyses dITP + H2O = dIMP + diphosphate + H(+). The catalysed reaction is ITP + H2O = IMP + diphosphate + H(+). Pyrophosphatase that catalyzes the hydrolysis of nucleoside triphosphates to their monophosphate derivatives, with a high preference for the non-canonical purine nucleotides XTP (xanthosine triphosphate), dITP (deoxyinosine triphosphate) and ITP. Seems to function as a house-cleaning enzyme that removes non-canonical purine nucleotides from the nucleotide pool, thus preventing their incorporation into DNA/RNA and avoiding chromosomal lesions. The sequence is that of dITP/XTP pyrophosphatase from Anaeromyxobacter sp. (strain Fw109-5).